Here is a 92-residue protein sequence, read N- to C-terminus: uncharacterized protein (92 aa).

This is an uncharacterized protein from Archaeoglobus fulgidus (strain ATCC 49558 / DSM 4304 / JCM 9628 / NBRC 100126 / VC-16).